The primary structure comprises 468 residues: Eukaryotic translation initiation factor 3 subunit M (468 aa).

Positions 40–61 (VAPLIEPLRQQEQSEEEPDRKQ) are disordered. The 172-residue stretch at 206–377 (DLELAQTHVV…SEFLVHRATY (172 aa)) folds into the PCI domain. A disordered region spans residues 419 to 468 (QAAAEEVGQGKSGDKGAKGGDRRRNPQQQQQSQPSQPQQAREVELVGGAE). Over residues 430–442 (SGDKGAKGGDRRR) the composition is skewed to basic and acidic residues. The span at 444–457 (PQQQQQSQPSQPQQ) shows a compositional bias: low complexity.

Belongs to the eIF-3 subunit M family. Component of the eukaryotic translation initiation factor 3 (eIF-3) complex.

It is found in the cytoplasm. Its function is as follows. Component of the eukaryotic translation initiation factor 3 (eIF-3) complex, which is involved in protein synthesis of a specialized repertoire of mRNAs and, together with other initiation factors, stimulates binding of mRNA and methionyl-tRNAi to the 40S ribosome. The eIF-3 complex specifically targets and initiates translation of a subset of mRNAs involved in cell proliferation. The chain is Eukaryotic translation initiation factor 3 subunit M from Aspergillus fumigatus (strain CBS 144.89 / FGSC A1163 / CEA10) (Neosartorya fumigata).